Consider the following 363-residue polypeptide: Caffeic acid 3-O-methyltransferase (363 aa).

Residue 130 to 136 participates in substrate binding; that stretch reads MNQDKVL. The substrate binding stretch occupies residues 162 to 180; sequence AFEYHGKDPRFNKVFNQGM. Residues Gly208, Asp231, Asp251, Met252, and Lys265 each coordinate S-adenosyl-L-methionine. Catalysis depends on His269, which acts as the Proton acceptor.

It belongs to the class I-like SAM-binding methyltransferase superfamily. Cation-independent O-methyltransferase family. COMT subfamily. As to quaternary structure, homodimer.

The catalysed reaction is (E)-caffeate + S-adenosyl-L-methionine = (E)-ferulate + S-adenosyl-L-homocysteine + H(+). The protein operates within aromatic compound metabolism; phenylpropanoid biosynthesis. Its function is as follows. Catalyzes the conversion of caffeic acid to ferulic acid and of 5-hydroxyferulic acid to sinapic acid. The resulting products may subsequently be converted to the corresponding alcohols that are incorporated into lignins. The polypeptide is Caffeic acid 3-O-methyltransferase (COMT1) (Catharanthus roseus (Madagascar periwinkle)).